Here is a 329-residue protein sequence, read N- to C-terminus: DNA-directed RNA polymerase subunit alpha (329 aa).

The tract at residues 1–235 (MLGSVTDFLK…EQLDAFVDLR (235 aa)) is alpha N-terminal domain (alpha-NTD). An alpha C-terminal domain (alpha-CTD) region spans residues 249–329 (FDPILLRPVD…NWPPASLADN (81 aa)).

This sequence belongs to the RNA polymerase alpha chain family. In terms of assembly, homodimer. The RNAP catalytic core consists of 2 alpha, 1 beta, 1 beta' and 1 omega subunit. When a sigma factor is associated with the core the holoenzyme is formed, which can initiate transcription.

The catalysed reaction is RNA(n) + a ribonucleoside 5'-triphosphate = RNA(n+1) + diphosphate. Its function is as follows. DNA-dependent RNA polymerase catalyzes the transcription of DNA into RNA using the four ribonucleoside triphosphates as substrates. The protein is DNA-directed RNA polymerase subunit alpha of Tolumonas auensis (strain DSM 9187 / NBRC 110442 / TA 4).